The sequence spans 423 residues: Autophagy-related protein 18 (423 aa).

WD repeat units lie at residues 1 to 34 (MNYV…KIFT), 183 to 223 (AHRA…KLYQ), 228 to 267 (TYPS…TGMP), and 367 to 407 (SRSG…GGEG). The L/FRRG motif signature appears at 224 to 228 (FRRGT). The segment at 260-320 (GGPVTGMPES…KSTGTFGSMI (61 aa)) is disordered.

It belongs to the WD repeat PROPPIN family. In terms of assembly, component of the PI(3,5)P2 regulatory complex.

The protein localises to the preautophagosomal structure membrane. It localises to the vacuole membrane. It is found in the endosome membrane. Its function is as follows. The PI(3,5)P2 regulatory complex regulates both the synthesis and turnover of phosphatidylinositol 3,5-bisphosphate (PtdIns(3,5)P2). Necessary for proper vacuole morphology. Plays an important role in osmotically-induced vacuole fragmentation. Required for cytoplasm to vacuole transport (Cvt) vesicle formation, pexophagy and starvation-induced autophagy. Involved in correct atg9 trafficking to the pre-autophagosomal structure. Might also be involved in premeiotic DNA replication. The protein is Autophagy-related protein 18 (atg18) of Sclerotinia sclerotiorum (strain ATCC 18683 / 1980 / Ss-1) (White mold).